Here is a 497-residue protein sequence, read N- to C-terminus: Probable cytosol aminopeptidase (497 aa).

The Mn(2+) site is built by Lys263 and Asp268. Residue Lys275 is part of the active site. The Mn(2+) site is built by Asp286, Asp345, and Glu347. Residue Arg349 is part of the active site.

It belongs to the peptidase M17 family. Mn(2+) serves as cofactor.

The protein localises to the cytoplasm. The catalysed reaction is Release of an N-terminal amino acid, Xaa-|-Yaa-, in which Xaa is preferably Leu, but may be other amino acids including Pro although not Arg or Lys, and Yaa may be Pro. Amino acid amides and methyl esters are also readily hydrolyzed, but rates on arylamides are exceedingly low.. It carries out the reaction Release of an N-terminal amino acid, preferentially leucine, but not glutamic or aspartic acids.. Functionally, presumably involved in the processing and regular turnover of intracellular proteins. Catalyzes the removal of unsubstituted N-terminal amino acids from various peptides. The sequence is that of Probable cytosol aminopeptidase from Agrobacterium fabrum (strain C58 / ATCC 33970) (Agrobacterium tumefaciens (strain C58)).